The primary structure comprises 312 residues: 4-hydroxyphenylacetate decarboxylase activating enzyme (312 aa).

The 284-residue stretch at 16 to 299 (HDGPGCRTSV…MEHLQQLYLD (284 aa)) folds into the Radical SAM core domain. The [4Fe-4S] cluster site is built by C30, C34, C37, C56, C62, C65, and C101. Residue 36–38 (WCA) coordinates S-adenosyl-L-methionine. 2 consecutive 4Fe-4S ferredoxin-type domains span residues 47–79 (KHIMVAENVCKWKNGCRSCINACSHDSIKFSED) and 80–112 (GKLKISWDTCEKCETFDCVNMCPNNALKQCVKE). Residues G140, 189–191 (DVK), and H263 each bind S-adenosyl-L-methionine.

This sequence belongs to the organic radical-activating enzymes family. In terms of assembly, monomer. [4Fe-4S] cluster is required as a cofactor.

It catalyses the reaction glycyl-[protein] + reduced [flavodoxin] + S-adenosyl-L-methionine = glycin-2-yl radical-[protein] + semiquinone [flavodoxin] + 5'-deoxyadenosine + L-methionine + H(+). In terms of biological role, catalyzes activation of 4-hydroxyphenylacetate decarboxylase under anaerobic conditions by generation of an organic free radical on a glycine residue, via a homolytic cleavage of S-adenosyl-L-methionine (SAM). In Clostridium scatologenes, this protein is 4-hydroxyphenylacetate decarboxylase activating enzyme.